A 475-amino-acid chain; its full sequence is MTNTATNIGYITQIIGPVVDVEFTTGKLPQIYNAIIIGSGENAVTCEVQQLLGNNKVRAVSMTSTDGLKRGMEVTDTQAPISVPVGKATLGRIFNVLGQPVDNMGDVALDQTLPIHRGSPAFTQLETKPSIFETGIKVVDLLAPYRRGGKIGLFGGAGVGKTVLIMELINNIAKAHGGVSVFGGVGERTREGNDLYMEMKESKVINESNLGESKVALVYGQMNEPPGARMRVGLTALTMAEYFRDVNKQDVLLFIDNIFRFVQAGSEVSALLGRMPSAVGYQPTLATEMGSLQERITSTTEGSITSIQAVYVPADDLTDPAPATTFSHLDATTVLSRNLAAKGIYPAVDPLDSTSTMLQINIVGQEHYSCAQNVKETLQRYKELQDIIAILGLDELSEEDRQIVARARKIERFLSQPFFVAEVFTGSPGKYVSLADTMKGFNMILNGELDELPEQSFYLVGNIDEAIEKAKSLKG.

155-162 (GGAGVGKT) lines the ATP pocket.

The protein belongs to the ATPase alpha/beta chains family. As to quaternary structure, F-type ATPases have 2 components, CF(1) - the catalytic core - and CF(0) - the membrane proton channel. CF(1) has five subunits: alpha(3), beta(3), gamma(1), delta(1), epsilon(1). CF(0) has four main subunits: a(1), b(1), b'(1) and c(9-12).

The protein localises to the plastid. Its subcellular location is the chloroplast thylakoid membrane. It catalyses the reaction ATP + H2O + 4 H(+)(in) = ADP + phosphate + 5 H(+)(out). Functionally, produces ATP from ADP in the presence of a proton gradient across the membrane. The catalytic sites are hosted primarily by the beta subunits. In Guillardia theta (Cryptophyte), this protein is ATP synthase subunit beta, chloroplastic.